Here is a 191-residue protein sequence, read N- to C-terminus: Probable calcium-binding protein CML8 (191 aa).

Positions 1–41 (MASKYRGYYHDEASSAAGGGGGGGGGDGYRREKQVRKKRLT) are disordered. Residues 17-27 (AGGGGGGGGGD) show a composition bias toward gly residues. 4 EF-hand domains span residues 43–78 (QKRKEIKEAFDLFDTDGSGTIDPKELNVAMRALGFE), 79–114 (MTPEQIHQMIAEVDKDGSGTIDFDEFVHMMTDKMGE), 116–151 (DAREELNKAFKIIDKDNNGKISDVDIQRLAIETGEP), and 152–187 (FTLDEVREMIEAADENGDGEVDHEEFLKMMKRIGFG). Residues Asp56, Asp58, Ser60, Thr62, Glu67, Asp92, Asp94, Ser96, Thr98, Glu103, Asp129, Asp131, Asn133, Lys135, Asp140, Asp165, Asn167, Asp169, Glu171, and Glu176 each coordinate Ca(2+).

In terms of biological role, potential calcium sensor. The sequence is that of Probable calcium-binding protein CML8 (CML8) from Oryza sativa subsp. japonica (Rice).